A 514-amino-acid polypeptide reads, in one-letter code: Na(+)/H(+) antiporter NhaB (514 aa).

A run of 12 helical transmembrane segments spans residues 23–43 (LALLVFLIINPFIFLANPFIA), 63–83 (PLLPGGLLAIEAVIIGMTSAA), 97–117 (LLLMFMVAGIYFMKQLLLFIF), 120–140 (LLLSIRSKMVLSLAFCVAAAF), 144–164 (FLDALTVVAVVISVAVGFYGI), 202–222 (LMMHAGVGTALGGVMTMVGEP), 238–258 (FFLRMSPVTVPVLVCGLLTCM), 303–323 (AIIGVWLVTALALHLAEVGLI), 357–377 (LTVFFSIVAVIIDQHLFAPII), 391–411 (LFYLFNGLLSSISDNVFVGTI), 447–467 (ATPNGQAAFLFLLTSALAPLI), and 475–495 (VWMALPYTIVLTLIGLLCVEF).

Belongs to the NhaB Na(+)/H(+) (TC 2.A.34) antiporter family.

The protein localises to the cell inner membrane. The enzyme catalyses 2 Na(+)(in) + 3 H(+)(out) = 2 Na(+)(out) + 3 H(+)(in). Functionally, na(+)/H(+) antiporter that extrudes sodium in exchange for external protons. This Salmonella paratyphi B (strain ATCC BAA-1250 / SPB7) protein is Na(+)/H(+) antiporter NhaB.